The primary structure comprises 264 residues: Glutamate racemase 2 (264 aa).

Residues 10–11 (DS) and 42–43 (YG) contribute to the substrate site. Cysteine 73 (proton donor/acceptor) is an active-site residue. 74–75 (NT) contacts substrate. Cysteine 181 functions as the Proton donor/acceptor in the catalytic mechanism. A substrate-binding site is contributed by 182–183 (TH).

This sequence belongs to the aspartate/glutamate racemases family.

The enzyme catalyses L-glutamate = D-glutamate. The protein operates within cell wall biogenesis; peptidoglycan biosynthesis. Functionally, provides the (R)-glutamate required for cell wall biosynthesis. The protein is Glutamate racemase 2 of Caldanaerobacter subterraneus subsp. tengcongensis (strain DSM 15242 / JCM 11007 / NBRC 100824 / MB4) (Thermoanaerobacter tengcongensis).